The following is a 262-amino-acid chain: 5'-nucleotidase SurE (262 aa).

Residues aspartate 8, aspartate 9, serine 39, and asparagine 91 each coordinate a divalent metal cation.

This sequence belongs to the SurE nucleotidase family. It depends on a divalent metal cation as a cofactor.

Its subcellular location is the cytoplasm. It catalyses the reaction a ribonucleoside 5'-phosphate + H2O = a ribonucleoside + phosphate. In terms of biological role, nucleotidase that shows phosphatase activity on nucleoside 5'-monophosphates. In Geobacter sulfurreducens (strain ATCC 51573 / DSM 12127 / PCA), this protein is 5'-nucleotidase SurE.